The chain runs to 229 residues: MSNQGEYPEDNRVGKHEPHDLSLTRRDLIKVSAATAAAAVVYPHSTLAASVPAATPAPEIMPLTLKVNGKTEQLEVDTRTTLLDALRENLHLIGTKKGCDHGQCGACTVLVNGRRLNACLTLAVMHQGAEITTIEGLGSPDNLHPMQAAFIKHDGFQCGYCTSGQICSSVAVLKEIQDGIPSHVTVDLVSPPERTADEIRERMSGNICRCGAYANILAAIEDAAGEIKS.

The segment at 1-21 (MSNQGEYPEDNRVGKHEPHDL) is disordered. The tat-type signal signal peptide spans 1–53 (MSNQGEYPEDNRVGKHEPHDLSLTRRDLIKVSAATAAAAVVYPHSTLAASVPA). Over residues 9–21 (EDNRVGKHEPHDL) the composition is skewed to basic and acidic residues. Residues 61–137 (MPLTLKVNGK…GAEITTIEGL (77 aa)) form the 2Fe-2S ferredoxin-type domain. Cys-99, Cys-104, Gly-105, Cys-107, Cys-119, Cys-158, Cys-161, Cys-208, and Cys-210 together coordinate [2Fe-2S] cluster.

Heterotrimer composed of PaoA, PaoB and PaoC. The cofactor is [2Fe-2S] cluster. Post-translationally, exported by the Tat system. The position of the signal peptide cleavage has not been experimentally proven.

The protein resides in the periplasm. It catalyses the reaction an aldehyde + A + H2O = a carboxylate + AH2 + H(+). Oxidizes aldehydes to the corresponding carboxylic acids with a preference for aromatic aldehydes. It might play a role in the detoxification of aldehydes to avoid cell damage. This is Aldehyde oxidoreductase iron-sulfur-binding subunit PaoA from Escherichia coli O157:H7.